Here is a 175-residue protein sequence, read N- to C-terminus: Protein MAL2 (175 aa).

The Cytoplasmic segment spans residues 1-33; that stretch reads MSAGGAVPPPPNPAVSFPAPRVTLPAGPDILRT. The MARVEL domain maps to 30 to 174; it reads ILRTYSGAFV…SLGLALRRWR (145 aa). Residues 34–54 traverse the membrane as a helical segment; the sequence is YSGAFVCLEIVLGGLVWILVA. The Lumenal portion of the chain corresponds to 55-65; that stretch reads SSNVPLPLLQG. A helical membrane pass occupies residues 66–86; it reads WVMFVSVTAFFFSLLFLGLFL. Residues 87-101 lie on the Cytoplasmic side of the membrane; the sequence is SGMVTQIDANWNFLD. A helical transmembrane segment spans residues 102–122; sequence FVYHFIVFVFYFGAFLLEAAA. At 123-148 the chain is on the lumenal side; it reads TSLHDLQCNTTMTVKPLLNDNQYNIN. N131 carries N-linked (GlcNAc...) asparagine glycosylation. A helical transmembrane segment spans residues 149-169; sequence VAATVFAFMTTACYGCSLGLA. Topologically, residues 170-175 are cytoplasmic; sequence LRRWRP.

Belongs to the MAL family. As to quaternary structure, interacts with TPD52L2.

It is found in the cell membrane. Its subcellular location is the apical cell membrane. Functionally, member of the machinery of polarized transport. Required for the indirect transcytotic route at the step of the egress of the transcytosing cargo from perinuclear endosomes in order for it to travel to the apical surface via a raft-dependent pathway. This is Protein MAL2 (Mal2) from Mus musculus (Mouse).